The following is a 500-amino-acid chain: FAD-linked oxidoreductase chyH (500 aa).

A signal peptide spans 1–20; sequence MRLQAVTAVAAWAVASACQS. One can recognise an FAD-binding PCMH-type domain in the interval 65 to 235; sequence LEVPTVNIVI…TSVTSKTYDI (171 aa). N199, N266, N275, and N383 each carry an N-linked (GlcNAc...) asparagine glycan.

The protein belongs to the oxygen-dependent FAD-linked oxidoreductase family. FAD is required as a cofactor.

The protein operates within pigment biosynthesis. In terms of biological role, FAD-linked oxidoreductase; part of the gene cluster that mediates the biosynthesis of the yellow pigment chrysogine. the NRPS chyA mediates the condensation of anthranilic acid and alanine into the intermediate 2-(2-aminopropanamido)benzoic acid. The remainder of the pathway is highly branched yielding at least 13 chrysogine-related compounds. The malonyl transferase chyE converts 2-(2-aminopropanamido)benzoic acid and 2-(2-aminopropanamido)benzamidine into 2-(2-(2-carboxyacetamido)propanamido)benzoic acid and 3-((1-((2-carbamoylphenyl)amino)-1-oxopropan-2-yl)amino)-3-oxopropanoic acid, respectively. ChyD is an amidase, being responsible for the amidation of the carboxylic acid moiety of 2-(2-aminopropanamido)benzoic acid, 2-(2-(2-carboxyacetamido)propanamido)benzoic acid and 2-(2-((4-amino-1-carboxy-4-oxobutyl)amino)propanamido)benzoic acid. ChyC is involved in the same reactions as ChyD, but plays a more minor role in the amidation reactions compared to chyD. The oxidoreductases chyH and chyM are involved in oxidation reactions that form N-pyruvoylanthranilamide from 2-(2-aminopropanamido)benzamidine and (1-((2-carbamoylphenyl)amino)-1-oxopropan-2-yl)glutamine, respectively. N-pyruvoylanthranilamide is further converted via two further branches in the pathway, yielding chrysogine and additional chrysogine-related coumpounds. Chrysogine is likely formed by a spontaneous ring closure from N-pyruvoylanthranilamide. This chain is FAD-linked oxidoreductase chyH, found in Penicillium rubens (strain ATCC 28089 / DSM 1075 / NRRL 1951 / Wisconsin 54-1255) (Penicillium chrysogenum).